Here is a 1060-residue protein sequence, read N- to C-terminus: MAEAASGAGDVTLEGERGKRPPPEGEPAAPASGVLDKLFGKRLLQAGRYLVSHKAWMKTVPTEDCDVLMTFPDTTDDHTLLWLLNHIRVGIPELIVQVRHHRHTRAYAFFVTATYESLLRGADELGLRKAVKAEFGGGTRSFSCEEDFIYENVESELRFFTSQERQSIIRFWLQNLRAKQGEALHNVRFLEDQPIIPELAARGIIQQVFPVHEQRILNRLMKSWVQAVCENQPLDDICDYFGVKIAMYFAWLGFYTSAMVYPAVFGSVLYTFTEADQTSRDVSCVVFALFNVIWSTLFLEEWKRRGAELAYKWGTLDSPGEAVEEPRPQFRGIRRISPITRAEEFYYPPWKRLLFQLLVSLPLCLACLICVFILMLGCFQLQELVLSVKGLPRLVRFLPKVMLALLVSVSAEGYKKLAVWLNDMENYRLESTYERHLIIKVVLFQFVNSYLSLFYIGFYLKDMDRLKEMLATLLITRQLLQNVREVLQPHLYRRLGSGELGLRTILELARALLGLLNPLRPDPRRHLEAQADEGGAGSRRCLGGGCGAPEEENEEEEEAAVERRPAGEGGEVPEGPRGGKEEDEEEDDDEDEDEEYEGEEGSLLDCGLRLKKVSFAERGAGRRRPGPSPDGLLEEGSPTMVEKGLEPGVFTLAEEDDEPEGPPGSPGPEPQTVLLRRARGEGRDQGPDGDRDTETGSGDAAGRQKRHNRSSWIDPPEEEHSPQLTQAELESCMKKYEDTFQDYQEMFVQFGYVVLFSSAFPLAALCALVNNLIEIRSDAFKLCTGLQRPFGRRVESIGQWQKVMEAMGVLAIVVNCYLIGQCGQLQRLFPWLSPEAAIVSVVVLEHLALLVKYLIHVAIPDIPGWVAEEMAKLEYQRREAFKRHERQAQQRFQQQQRRRREEEERQRHAEQQARRERDTGGREEARAEAPGPDPVAERGAAKAKGSERPRRPGALLPPGPVLRLKQIIPLQTRPPAPTGCAPPPRSPADTRLPAFLSLRFLKAPERGPSPPRPGKLFAFSAREPSANGAPGGGARAHRSAGDEPAAAEPEPRPEDAGHRP.

A disordered region spans residues 1 to 32; the sequence is MAEAASGAGDVTLEGERGKRPPPEGEPAAPAS. An N-acetylalanine modification is found at A2. The Cytoplasmic portion of the chain corresponds to 2 to 244; the sequence is AEAASGAGDV…DDICDYFGVK (243 aa). A compositionally biased stretch (basic and acidic residues) spans 14–23; it reads EGERGKRPPP. The chain crosses the membrane as a helical span at residues 245–265; it reads IAMYFAWLGFYTSAMVYPAVF. Topologically, residues 266–281 are extracellular; that stretch reads GSVLYTFTEADQTSRD. Residues 282 to 302 traverse the membrane as a helical segment; the sequence is VSCVVFALFNVIWSTLFLEEW. At 303 to 356 the chain is on the cytoplasmic side; that stretch reads KRRGAELAYKWGTLDSPGEAVEEPRPQFRGIRRISPITRAEEFYYPPWKRLLFQ. At S318 the chain carries Phosphoserine. A helical transmembrane segment spans residues 357 to 377; it reads LLVSLPLCLACLICVFILMLG. Residues 378–400 lie on the Extracellular side of the membrane; that stretch reads CFQLQELVLSVKGLPRLVRFLPK. The helical transmembrane segment at 401-421 threads the bilayer; that stretch reads VMLALLVSVSAEGYKKLAVWL. Residues 422–437 lie on the Cytoplasmic side of the membrane; it reads NDMENYRLESTYERHL. Residues 438-458 traverse the membrane as a helical segment; sequence IIKVVLFQFVNSYLSLFYIGF. At 459-745 the chain is on the extracellular side; it reads YLKDMDRLKE…YEDTFQDYQE (287 aa). Disordered stretches follow at residues 529–605, 619–640, 653–672, and 680–723; these read AQAD…SLLD, GAGR…SPTM, AEED…EPQT, and GEGR…HSPQ. The span at 534 to 547 shows a compositional bias: gly residues; that stretch reads GGAGSRRCLGGGCG. Composition is skewed to acidic residues over residues 549-559 and 581-602; these read PEEENEEEEEA and EEDE…EEGS. S665 carries the phosphoserine modification. Positions 680-694 are enriched in basic and acidic residues; that stretch reads GEGRDQGPDGDRDTE. N-linked (GlcNAc...) asparagine glycosylation is present at N708. A helical membrane pass occupies residues 746 to 766; sequence MFVQFGYVVLFSSAFPLAALC. Residues 767–802 are Cytoplasmic-facing; the sequence is ALVNNLIEIRSDAFKLCTGLQRPFGRRVESIGQWQK. S796 is modified (phosphoserine). The chain crosses the membrane as a helical span at residues 803–823; sequence VMEAMGVLAIVVNCYLIGQCG. Residues 824-836 lie on the Extracellular side of the membrane; it reads QLQRLFPWLSPEA. A helical membrane pass occupies residues 837-857; sequence AIVSVVVLEHLALLVKYLIHV. Residues 858 to 1060 are Cytoplasmic-facing; sequence AIPDIPGWVA…PRPEDAGHRP (203 aa). The tract at residues 884-1060 is disordered; it reads HERQAQQRFQ…PRPEDAGHRP (177 aa). Basic and acidic residues-rich tracts occupy residues 899 to 927 and 935 to 950; these read RREE…EARA and VAER…ERPR. The segment covering 972-986 has biased composition (pro residues); it reads TRPPAPTGCAPPPRS. Residue R991 is modified to Asymmetric dimethylarginine; alternate. Residue R991 is modified to Omega-N-methylarginine; alternate. R999 carries the omega-N-methylarginine modification. Residues 1049–1060 show a composition bias toward basic and acidic residues; the sequence is PEPRPEDAGHRP.

It belongs to the anoctamin family. Predominant expression seen in epithelial tissues.

The protein resides in the cell membrane. In terms of biological role, does not exhibit calcium-activated chloride channel (CaCC) activity. The chain is Anoctamin-8 (Ano8) from Mus musculus (Mouse).